A 258-amino-acid polypeptide reads, in one-letter code: Indole-3-glycerol phosphate synthase (258 aa).

The protein belongs to the TrpC family.

The enzyme catalyses 1-(2-carboxyphenylamino)-1-deoxy-D-ribulose 5-phosphate + H(+) = (1S,2R)-1-C-(indol-3-yl)glycerol 3-phosphate + CO2 + H2O. It functions in the pathway amino-acid biosynthesis; L-tryptophan biosynthesis; L-tryptophan from chorismate: step 4/5. The chain is Indole-3-glycerol phosphate synthase from Campylobacter fetus subsp. fetus (strain 82-40).